Reading from the N-terminus, the 158-residue chain is Urease accessory protein UreE (158 aa).

It belongs to the UreE family.

It localises to the cytoplasm. Its function is as follows. Involved in urease metallocenter assembly. Binds nickel. Probably functions as a nickel donor during metallocenter assembly. The polypeptide is Urease accessory protein UreE (Klebsiella pneumoniae (strain 342)).